Consider the following 1044-residue polypeptide: Pre-mRNA-splicing factor ATP-dependent RNA helicase DHX16 (1044 aa).

Disordered regions lie at residues Glu-101 to Glu-210 and Leu-374 to Ser-394. Residues Ser-103, Ser-106, and Ser-107 each carry the phosphoserine modification. Positions Gln-119–Lys-130 are enriched in basic residues. A compositionally biased stretch (acidic residues) spans Glu-134–Ala-143. Ser-163 carries the phosphoserine modification. The segment covering Arg-169 to Glu-210 has biased composition (basic and acidic residues). In terms of domain architecture, Helicase ATP-binding spans Leu-412 to Pro-576. An ATP-binding site is contributed by Gly-425 to Thr-432. A DEAH box motif is present at residues Asp-523 to His-526. Residues Ser-601 to Gly-774 form the Helicase C-terminal domain. Thr-715 carries the phosphothreonine modification.

Belongs to the DEAD box helicase family. DEAH subfamily. DDX16/PRP8 sub-subfamily. Component of pre-catalytic spliceosome complexes. Component of the minor spliceosome, which splices U12-type introns. Interacts with GPKOW. Interacts with TRIM6. Interacts with RIGI.

Its subcellular location is the nucleus. The protein localises to the nucleoplasm. It is found in the cytoplasm. It catalyses the reaction ATP + H2O = ADP + phosphate + H(+). In terms of biological role, required for pre-mRNA splicing as a component of the spliceosome. Contributes to pre-mRNA splicing after spliceosome formation and prior to the first transesterification reaction. As a component of the minor spliceosome, involved in the splicing of U12-type introns in pre-mRNAs. Also plays a role in innate antiviral response by acting as a pattern recognition receptor sensing splicing signals in viral RNA. Mechanistically, TRIM6 promotes the interaction between unanchored 'Lys-48'-polyubiquitin chains and DHX16, leading to DHX16 interaction with RIGI and ssRNA to amplify RIGI-dependent innate antiviral immune responses. This is Pre-mRNA-splicing factor ATP-dependent RNA helicase DHX16 (DHX16) from Pan troglodytes (Chimpanzee).